The chain runs to 2211 residues: Orsellinic acid synthase (2211 aa).

The segment at 44 to 246 (TFREQVSDAI…TVAVVHSLYH (203 aa)) is N-terminal acylcarrier protein transacylase domain (SAT). In terms of domain architecture, Ketosynthase family 3 (KS3) spans 380-805 (WDDIAIVGMA…GSNAAVIIGE (426 aa)). Active-site for beta-ketoacyl synthase activity residues include Cys-549, His-684, and His-724. The interval 910–1228 (VFIFSGQGSQ…QLTTLKKNVP (319 aa)) is malonyl-CoA:ACP transacylase (MAT) domain. The active-site For acyl/malonyl transferase activity is the Ser-1006. The N-terminal hotdog fold stretch occupies residues 1309 to 1440 (HAIQKLSHGA…GVVKQSNMAS (132 aa)). Residues 1309-1629 (HAIQKLSHGA…FQHVKIPLIE (321 aa)) enclose the PKS/mFAS DH domain. Residues 1334–1573 (EFIEGHLVCG…GATTLRAPVV (240 aa)) form a product template (PT) domain region. His-1339 acts as the Proton acceptor; for dehydratase activity in catalysis. Residues 1473 to 1629 (VQVFSKRAMY…FQHVKIPLIE (157 aa)) form a C-terminal hotdog fold region. The active-site Proton donor; for dehydratase activity is the Asp-1537. 2 Carrier domains span residues 1681 to 1755 (AAPE…EALS) and 1787 to 1865 (STVD…VKRP). At Ser-1715 the chain carries O-(pantetheine 4'-phosphoryl)serine. The disordered stretch occupies residues 1755–1786 (SPTPVGNDVDNDSPTPGSERGSDSAISTPASV). Ser-1824 carries the O-(pantetheine 4'-phosphoryl)serine modification. The segment at 1937–2204 (SGKSPLFLIH…AAVSAALVDA (268 aa)) is thioesterase (TE) domain.

It catalyses the reaction 3 malonyl-CoA + acetyl-CoA + 2 H(+) = orsellinate + 3 CO2 + 4 CoA. The protein operates within secondary metabolite biosynthesis. Non-reducing polyketide synthase; part of the gene cluster that mediates the biosynthesis of the bibenzoquinone oosporein, a metabolite required for fungal virulence that acts by evading host immunity to facilitate fungal multiplication in insects. The non-reducing polyketide synthase OpS1 produces orsellinic acid by condensing acetyl-CoA with 3 malonyl-CoA units. Orsellinic acid is then hydroxylated to benzenetriol by the hydroxylase OpS4. The intermediate is oxidized either nonenzymatically to 5,5'-dideoxy-oosporein or enzymatically to benzenetetrol by the oxidoreductase OpS7. The latter is further dimerized to oosporein by the catalase OpS5. OpS6 probably functions en route for protecting cells against oxidative stress by scavenging any leaked free radical form of benzenetetrol by activating the thiol group of glutathione. In Beauveria bassiana (strain ARSEF 2860) (White muscardine disease fungus), this protein is Orsellinic acid synthase.